The following is a 302-amino-acid chain: Glutaminase (302 aa).

Substrate contacts are provided by Ser61, Asn111, Glu155, Asn162, Tyr186, Tyr238, and Val256.

Belongs to the glutaminase family. As to quaternary structure, homotetramer.

The enzyme catalyses L-glutamine + H2O = L-glutamate + NH4(+). The polypeptide is Glutaminase (Stutzerimonas stutzeri (strain A1501) (Pseudomonas stutzeri)).